The primary structure comprises 259 residues: Ribosomal RNA small subunit methyltransferase J (259 aa).

Residues R101–D102, E117–R118, S153–S154, and D176 each bind S-adenosyl-L-methionine.

This sequence belongs to the methyltransferase superfamily. RsmJ family.

It localises to the cytoplasm. It catalyses the reaction guanosine(1516) in 16S rRNA + S-adenosyl-L-methionine = N(2)-methylguanosine(1516) in 16S rRNA + S-adenosyl-L-homocysteine + H(+). Functionally, specifically methylates the guanosine in position 1516 of 16S rRNA. The sequence is that of Ribosomal RNA small subunit methyltransferase J from Aliivibrio fischeri (strain ATCC 700601 / ES114) (Vibrio fischeri).